The primary structure comprises 313 residues: Ribosomal RNA small subunit methyltransferase H (313 aa).

Residues 34-36 (GGH), Asp55, Phe82, Asp103, and Gln110 each bind S-adenosyl-L-methionine.

Belongs to the methyltransferase superfamily. RsmH family.

It is found in the cytoplasm. It catalyses the reaction cytidine(1402) in 16S rRNA + S-adenosyl-L-methionine = N(4)-methylcytidine(1402) in 16S rRNA + S-adenosyl-L-homocysteine + H(+). Specifically methylates the N4 position of cytidine in position 1402 (C1402) of 16S rRNA. The chain is Ribosomal RNA small subunit methyltransferase H from Pelobacter propionicus (strain DSM 2379 / NBRC 103807 / OttBd1).